A 232-amino-acid polypeptide reads, in one-letter code: Phosphatidylserine decarboxylase proenzyme (232 aa).

The active-site Schiff-base intermediate with substrate; via pyruvic acid is the Ser190. Ser190 bears the Pyruvic acid (Ser); by autocatalysis mark.

Belongs to the phosphatidylserine decarboxylase family. PSD-A subfamily. In terms of assembly, heterodimer of a large membrane-associated beta subunit and a small pyruvoyl-containing alpha subunit. Pyruvate is required as a cofactor. In terms of processing, is synthesized initially as an inactive proenzyme. Formation of the active enzyme involves a self-maturation process in which the active site pyruvoyl group is generated from an internal serine residue via an autocatalytic post-translational modification. Two non-identical subunits are generated from the proenzyme in this reaction, and the pyruvate is formed at the N-terminus of the alpha chain, which is derived from the carboxyl end of the proenzyme. The post-translation cleavage follows an unusual pathway, termed non-hydrolytic serinolysis, in which the side chain hydroxyl group of the serine supplies its oxygen atom to form the C-terminus of the beta chain, while the remainder of the serine residue undergoes an oxidative deamination to produce ammonia and the pyruvoyl prosthetic group on the alpha chain.

It localises to the cell membrane. The enzyme catalyses a 1,2-diacyl-sn-glycero-3-phospho-L-serine + H(+) = a 1,2-diacyl-sn-glycero-3-phosphoethanolamine + CO2. Its pathway is phospholipid metabolism; phosphatidylethanolamine biosynthesis; phosphatidylethanolamine from CDP-diacylglycerol: step 2/2. Catalyzes the formation of phosphatidylethanolamine (PtdEtn) from phosphatidylserine (PtdSer). The chain is Phosphatidylserine decarboxylase proenzyme from Rhizobium leguminosarum bv. trifolii (strain WSM2304).